The following is a 495-amino-acid chain: Adenosylhomocysteinase (495 aa).

Substrate-binding residues include threonine 71, aspartate 156, and glutamate 218. 219-221 serves as a coordination point for NAD(+); that stretch reads TTT. Substrate is bound by residues lysine 248 and aspartate 252. NAD(+) is bound by residues asparagine 253, 282 to 287, glutamate 305, asparagine 340, 361 to 363, and asparagine 409; these read GYGDVG and IGH.

Belongs to the adenosylhomocysteinase family. NAD(+) serves as cofactor.

Its subcellular location is the cytoplasm. It catalyses the reaction S-adenosyl-L-homocysteine + H2O = L-homocysteine + adenosine. The protein operates within amino-acid biosynthesis; L-homocysteine biosynthesis; L-homocysteine from S-adenosyl-L-homocysteine: step 1/1. Its function is as follows. May play a key role in the regulation of the intracellular concentration of adenosylhomocysteine. The protein is Adenosylhomocysteinase of Mycobacterium bovis (strain ATCC BAA-935 / AF2122/97).